The primary structure comprises 211 residues: Adenylate kinase (211 aa).

G10 to T15 serves as a coordination point for ATP. The interval S30 to V59 is NMP. Residues T31, R36, G57 to V59, G85 to R88, and Q92 contribute to the AMP site. An LID region spans residues G121–D158. Residue R122 participates in ATP binding. Zn(2+) contacts are provided by C125 and C128. S131–Y132 serves as a coordination point for ATP. Residues C145 and C148 each coordinate Zn(2+). AMP is bound by residues R155 and R166. Residue P194 participates in ATP binding.

It belongs to the adenylate kinase family. In terms of assembly, monomer.

Its subcellular location is the cytoplasm. The enzyme catalyses AMP + ATP = 2 ADP. The protein operates within purine metabolism; AMP biosynthesis via salvage pathway; AMP from ADP: step 1/1. Its function is as follows. Catalyzes the reversible transfer of the terminal phosphate group between ATP and AMP. Plays an important role in cellular energy homeostasis and in adenine nucleotide metabolism. This chain is Adenylate kinase, found in Treponema pallidum (strain Nichols).